Here is a 262-residue protein sequence, read N- to C-terminus: Flap endonuclease Xni (262 aa).

Asp105 contacts Mg(2+). One can recognise a 5'-3' exonuclease domain in the interval 164 to 251 (SQFLDLMALA…NINLKDFRAN (88 aa)). K(+) is bound by residues Leu172, Ala173, Pro181, Ile183, and Ile186. The interval 185-190 (GIGPKS) is interaction with DNA.

Belongs to the Xni family. The cofactor is Mg(2+). Requires K(+) as cofactor.

In terms of biological role, has flap endonuclease activity. During DNA replication, flap endonucleases cleave the 5'-overhanging flap structure that is generated by displacement synthesis when DNA polymerase encounters the 5'-end of a downstream Okazaki fragment. The protein is Flap endonuclease Xni of Shewanella sp. (strain W3-18-1).